A 607-amino-acid polypeptide reads, in one-letter code: COMPASS component cclA (607 aa).

Residues 1-19 (MASTHAAGSPAPSSSINSP) show a composition bias toward low complexity. Disordered stretches follow at residues 1–22 (MASTHAAGSPAPSSSINSPILH) and 34–86 (GEGS…KSVA). The span at 57-69 (SKRNKRDSRKKRE) shows a compositional bias: basic residues. The 220-residue stretch at 157-376 (IADTDFPHIK…YAFNLKETPA (220 aa)) folds into the B30.2/SPRY domain. Residues 587-607 (NTPITDVPVPPEPEDTPMTGG) form a disordered region.

It belongs to the cclA family. In terms of assembly, component of the COMPASS complex.

The protein resides in the nucleus. It is found in the chromosome. It localises to the telomere. In terms of biological role, component of the COMPASS (Set1C) complex that specifically mono-, di- and trimethylates histone H3 to form H3K4me1/2/3, which subsequently plays a role in telomere length maintenance and transcription elongation regulation. Controls the production of several secondary metabolites, including monodictyphenone, emodin and emodin derivatives, as well as two anti-osteoporosis polyketides, F9775A and F9775B. The polypeptide is COMPASS component cclA (Emericella nidulans (strain FGSC A4 / ATCC 38163 / CBS 112.46 / NRRL 194 / M139) (Aspergillus nidulans)).